Consider the following 246-residue polypeptide: MAAPGPALCLFDVDGTLTAPRQKITKEMDDFLQKLRQKIKIGVVGGSDFEKVQEQLGNDVVEKYDYVFPENGLVAYKDGKLLCKQNIQSHLGEALIQDLINYCLSYIAKVKLPKKRGTFIEFRNGMLNVSPIGRSCSQEERIEFYELDKKENIRQKFVADLRKEFAGKGLTFSIGGQISFDVFPDGWDKRYCLRHVENDGYKTIYFFGDKTMPGGNDHEIFTDPRTVGYSVTAPEDTRRICEELFS.

A2 carries the N-acetylalanine modification. D12 acts as the Nucleophile in catalysis. D12 and D14 together coordinate Mg(2+). D14 functions as the Proton donor/acceptor in the catalytic mechanism. R21, R123, R134, and R141 together coordinate alpha-D-mannose 1-phosphate. Residue K149 is modified to N6-acetyllysine. Alpha-D-mannose 1-phosphate is bound by residues S179 and D181. Residues D209, F221, D223, and T226 each contribute to the Mg(2+) site.

Belongs to the eukaryotic PMM family. In terms of assembly, homodimer.

It localises to the cytoplasm. It carries out the reaction alpha-D-mannose 1-phosphate = D-mannose 6-phosphate. It participates in nucleotide-sugar biosynthesis; GDP-alpha-D-mannose biosynthesis; alpha-D-mannose 1-phosphate from D-fructose 6-phosphate: step 2/2. In terms of biological role, involved in the synthesis of the GDP-mannose and dolichol-phosphate-mannose required for a number of critical mannosyl transfer reactions. This chain is Phosphomannomutase 2 (PMM2), found in Macaca fascicularis (Crab-eating macaque).